Reading from the N-terminus, the 220-residue chain is Small ribosomal subunit protein eS8 (220 aa).

Disordered stretches follow at residues 1–41 (MGIS…LSSN) and 131–151 (AKKD…KKSN). Over residues 8–26 (MHKRRATGGKQKAWRKKRK) the composition is skewed to basic residues.

This sequence belongs to the eukaryotic ribosomal protein eS8 family.

This chain is Small ribosomal subunit protein eS8 (RPS8), found in Oryza sativa subsp. japonica (Rice).